Reading from the N-terminus, the 432-residue chain is Glutamate--tRNA ligase 2 (432 aa).

Residues 6–16 carry the 'HIGH' region motif; the sequence is PSPTGDMHIGN. Residues 235-239 carry the 'KMSKS' region motif; that stretch reads KMSKR. Lys-238 serves as a coordination point for ATP.

The protein belongs to the class-I aminoacyl-tRNA synthetase family. Glutamate--tRNA ligase type 1 subfamily. Monomer.

The protein resides in the cytoplasm. The catalysed reaction is tRNA(Glu) + L-glutamate + ATP = L-glutamyl-tRNA(Glu) + AMP + diphosphate. Its function is as follows. Catalyzes the attachment of glutamate to tRNA(Glu) in a two-step reaction: glutamate is first activated by ATP to form Glu-AMP and then transferred to the acceptor end of tRNA(Glu). The protein is Glutamate--tRNA ligase 2 of Sulfurimonas denitrificans (strain ATCC 33889 / DSM 1251) (Thiomicrospira denitrificans (strain ATCC 33889 / DSM 1251)).